Consider the following 903-residue polypeptide: Valine--tRNA ligase (903 aa).

The span at M1–N15 shows a compositional bias: polar residues. Residues M1–K22 form a disordered region. A 'HIGH' region motif is present at residues P61 to H71. A 'KMSKS' region motif is present at residues K552–S556. Residue K555 participates in ATP binding. A coiled-coil region spans residues T836–L902.

It belongs to the class-I aminoacyl-tRNA synthetase family. ValS type 1 subfamily. Monomer.

It is found in the cytoplasm. It carries out the reaction tRNA(Val) + L-valine + ATP = L-valyl-tRNA(Val) + AMP + diphosphate. Functionally, catalyzes the attachment of valine to tRNA(Val). As ValRS can inadvertently accommodate and process structurally similar amino acids such as threonine, to avoid such errors, it has a 'posttransfer' editing activity that hydrolyzes mischarged Thr-tRNA(Val) in a tRNA-dependent manner. This Corynebacterium efficiens (strain DSM 44549 / YS-314 / AJ 12310 / JCM 11189 / NBRC 100395) protein is Valine--tRNA ligase.